Consider the following 376-residue polypeptide: Protein-glutamate methylesterase/protein-glutamine glutaminase (376 aa).

The Response regulatory domain occupies 5-122; sequence KVLIVDDSAL…QHTFEDYTDE (118 aa). D56 is subject to 4-aspartylphosphate. Residues 185-376 enclose the CheB-type methylesterase domain; sequence SKPSHKVIAL…PEKILALIKK (192 aa). Catalysis depends on residues S197, H223, and D319.

It belongs to the CheB family. Post-translationally, phosphorylated by CheA. Phosphorylation of the N-terminal regulatory domain activates the methylesterase activity.

The protein resides in the cytoplasm. The enzyme catalyses [protein]-L-glutamate 5-O-methyl ester + H2O = L-glutamyl-[protein] + methanol + H(+). The catalysed reaction is L-glutaminyl-[protein] + H2O = L-glutamyl-[protein] + NH4(+). Its function is as follows. Involved in chemotaxis. Part of a chemotaxis signal transduction system that modulates chemotaxis in response to various stimuli. Catalyzes the demethylation of specific methylglutamate residues introduced into the chemoreceptors (methyl-accepting chemotaxis proteins or MCP) by CheR. Also mediates the irreversible deamidation of specific glutamine residues to glutamic acid. This is Protein-glutamate methylesterase/protein-glutamine glutaminase from Hydrogenovibrio crunogenus (strain DSM 25203 / XCL-2) (Thiomicrospira crunogena).